A 228-amino-acid chain; its full sequence is Phosphoenolpyruvate guanylyltransferase (228 aa).

Positions 148, 164, and 167 each coordinate phosphoenolpyruvate.

The protein belongs to the CofC family.

The enzyme catalyses phosphoenolpyruvate + GTP + H(+) = enolpyruvoyl-2-diphospho-5'-guanosine + diphosphate. Its pathway is cofactor biosynthesis; coenzyme F420 biosynthesis. Its function is as follows. Guanylyltransferase that catalyzes the activation of phosphoenolpyruvate (PEP) as enolpyruvoyl-2-diphospho-5'-guanosine, via the condensation of PEP with GTP. It is involved in the biosynthesis of coenzyme F420, a hydride carrier cofactor. The protein is Phosphoenolpyruvate guanylyltransferase of Thermomonospora curvata (strain ATCC 19995 / DSM 43183 / JCM 3096 / KCTC 9072 / NBRC 15933 / NCIMB 10081 / Henssen B9).